The following is a 457-amino-acid chain: Alkylcitrate synthase phiJ (457 aa).

Residues histidine 328 and aspartate 384 contribute to the active site.

It belongs to the citrate synthase family.

The catalysed reaction is (2E,10E)-dode-2,10-dicenoyl-CoA + oxaloacetate + H2O = (4E,11E)-2-hydroxytrideca-4,11-dien-1,2,3-tricarboxylate + CoA + H(+). It functions in the pathway secondary metabolite biosynthesis. In terms of biological role, alkylcitrate synthase; part of the gene cluster that mediates the biosynthesis of the antihypercholesterolemic agents phomoidrides which are dimeric anhydrides. Within the pathway, the alkylcitrate synthase (ACS) phiJ and the alkylcitrate dehydratase (ACDH) phiI produce the decarboxylated monomeric anhydrides by coupling the C12-fatty acyl product from phiA with oxalacetic acid. The pathway begins with the highly reducing polyketide synthase phiA that catalyzes the formation of a C12-fatty acyl-ACP, starting from one acetate and 5 malonate units. The hydrolase phiM is involved in the release of the C12-fatty acyl chain from phiA. The alkylcitrate synthase (ACS) phiJ and the alkylcitrate dehydratase (ACDH) phiI then give rise to decarboxylated monomeric anhydrides by coupling the C12-fatty acyl chain with oxalacetic acid. The cyclase phiC is responsible for the dimerization of the monomeric anhydrides which leads to the production of prephomoidride that contains the characteristic bicyclo[4.3.1]deca-1,6-diene system of phomoidrides. Iterative oxidation catalyzed by the alpha-ketoglutarate-dependent dioxygenase phiK produced then phomoidride A. Finally, the methyltransferase phiE converts phomoidride A to phomoidride B via an acetalization reaction. The phosphatidylethanolamine-binding protein phiB and phiN are not essential for dimerization and their functions have still to be determined. This chain is Alkylcitrate synthase phiJ, found in Fungal sp. (strain ATCC 74256).